Consider the following 277-residue polypeptide: Bifunctional protein FolD (277 aa).

Residues 159–161 (GRS), Ser-184, and Ile-225 each bind NADP(+).

The protein belongs to the tetrahydrofolate dehydrogenase/cyclohydrolase family. Homodimer.

It catalyses the reaction (6R)-5,10-methylene-5,6,7,8-tetrahydrofolate + NADP(+) = (6R)-5,10-methenyltetrahydrofolate + NADPH. It carries out the reaction (6R)-5,10-methenyltetrahydrofolate + H2O = (6R)-10-formyltetrahydrofolate + H(+). The protein operates within one-carbon metabolism; tetrahydrofolate interconversion. In terms of biological role, catalyzes the oxidation of 5,10-methylenetetrahydrofolate to 5,10-methenyltetrahydrofolate and then the hydrolysis of 5,10-methenyltetrahydrofolate to 10-formyltetrahydrofolate. This is Bifunctional protein FolD from Acholeplasma laidlawii (strain PG-8A).